The following is a 331-amino-acid chain: MTSPHFSSYDEGPLDVSMAATNLENQLHSAQKNLLFLQREHASTLKGLHSEIRRLQQHCTDLTYELTVKSSEQTGDGTSKSSELKKRCEELEAQLKVKENENAELLKELEQKNAMITVLENTIKEREKKYLEELKAKSHKLTLLSSELEQRASTIAYLTSQLHAAKKKLMSSSGTSDASPSGSPVLASYKPAPPKDKLPETPRRRMKKSLSAPLHPEFEEVYRFGAESRKLLLREPVDAMPDPTPFLLARESAEVHLIKERPLVIPPIASDRSGEQHSPAREKPHKAHVGVAHRIHHATPPQAQPEVKTLAVDQVNGGKVVRKHSGTDRTV.

2 coiled-coil regions span residues Met18 to Thr44 and Asp76 to Ala152. Residues Ser171–Pro184 are compositionally biased toward low complexity. The tract at residues Ser171–Ala212 is disordered. Residues Pro193–Arg203 show a composition bias toward basic and acidic residues. At Ser209 the chain carries Phosphoserine.

As to quaternary structure, interacts with CEP164. In terms of assembly, (Microbial infection) Interacts with ebolavirus protein NP; this interaction sequesters NP in the cytoplasm. Phosphorylated at Ser-209 by TTBK2.

Its subcellular location is the cytoplasm. The protein localises to the cytoskeleton. It localises to the microtubule organizing center. The protein resides in the centrosome. It is found in the centriole. Interferon-stimulated protein that plays a role in innate immunity. Strongly inhibits ebolavirus transcription and replication. Forms a complex with viral RNA-bound nucleocapsid NP and thereby prevents the transport of NP to the cell surface. This is Coiled-coil domain-containing protein 92 (CCDC92) from Homo sapiens (Human).